The sequence spans 109 residues: DNA-directed RNA polymerase subunit I (109 aa).

It carries out the reaction RNA(n) + a ribonucleoside 5'-triphosphate = RNA(n+1) + diphosphate. DNA-dependent RNA polymerase catalyzes the transcription of DNA into RNA using the four ribonucleoside triphosphates as substrates. In Methanocaldococcus jannaschii (strain ATCC 43067 / DSM 2661 / JAL-1 / JCM 10045 / NBRC 100440) (Methanococcus jannaschii), this protein is DNA-directed RNA polymerase subunit I (rpoI).